Consider the following 90-residue polypeptide: MLPEKLHNLPHNGKRIFYKFYDRSLRKFGSREVAVKLAVCAVRKKYTLVRGQWRARPDANDADTTSSSSSSETCTESDDSSDVPPARYAV.

Residues 53–90 are disordered; the sequence is WRARPDANDADTTSSSSSSETCTESDDSSDVPPARYAV. Residues 63 to 74 are compositionally biased toward low complexity; that stretch reads DTTSSSSSSETC.

This is an uncharacterized protein from Orgyia pseudotsugata (Douglas-fir tussock moth).